The sequence spans 273 residues: Oxidized low-density lipoprotein receptor 1 (273 aa).

Residues 1–22 (MTFDDLKIQTVKDQPDEKSNGK) form a disordered region. At 1–36 (MTFDDLKIQTVKDQPDEKSNGKKAKGLQFLYSPWWC) the chain is on the cytoplasmic side. S-palmitoyl cysteine attachment occurs at residues C36 and C46. The chain crosses the membrane as a helical; Signal-anchor for type II membrane protein span at residues 37–57 (LAAATLGVLCLGLVVTIMVLG). The segment at 58-150 (MQLSQVSDLL…SAPCPQDWIW (93 aa)) is neck. Residues 58–273 (MQLSQVSDLL…CQKKANLRAQ (216 aa)) lie on the Extracellular side of the membrane. Residues 64–123 (SDLLTQEQANLTHQKKKLEGQISARQQAEEASQESENELKEMIETLARKLNEKSKEQMEL) adopt a coiled-coil conformation. N-linked (GlcNAc...) asparagine glycosylation occurs at N73. N-linked (GlcNAc...) (complex) asparagine glycosylation is present at N139. Cystine bridges form between C144-C155, C172-C264, and C243-C256. Positions 151–265 (HGENCYLFSS…CILAAFSICQ (115 aa)) constitute a C-type lectin domain.

Homodimer; disulfide-linked. May form a hexamer composed of 3 homodimers. Interacts with HSP70. As to quaternary structure, (Microbial infection) Binds to the head and beginning of the coiled stalk of N.meningitidis adhesin A (nadA) variant 3; binding can be abrogated by monoclonal antibodies against the specific regions of NadA. Binding occurs in protein microarrays, in solution and when LOX-1 is expressed on the cell surface. In terms of processing, the intrachain disulfide-bonds prevent N-glycosylation at some sites. Post-translationally, N-glycosylated. Expressed at high level in endothelial cells and vascular-rich organs such as placenta, lung, liver and brain, aortic intima, bone marrow, spinal cord and substantia nigra. Also expressed at the surface of dendritic cells. Widely expressed at intermediate and low level.

The protein resides in the cell membrane. It is found in the membrane raft. It localises to the secreted. Functionally, receptor that mediates the recognition, internalization and degradation of oxidatively modified low density lipoprotein (oxLDL) by vascular endothelial cells. OxLDL is a marker of atherosclerosis that induces vascular endothelial cell activation and dysfunction, resulting in pro-inflammatory responses, pro-oxidative conditions and apoptosis. Its association with oxLDL induces the activation of NF-kappa-B through an increased production of intracellular reactive oxygen and a variety of pro-atherogenic cellular responses including a reduction of nitric oxide (NO) release, monocyte adhesion and apoptosis. In addition to binding oxLDL, it acts as a receptor for the HSP70 protein involved in antigen cross-presentation to naive T-cells in dendritic cells, thereby participating in cell-mediated antigen cross-presentation. Also involved in inflammatory process, by acting as a leukocyte-adhesion molecule at the vascular interface in endotoxin-induced inflammation. Also acts as a receptor for advanced glycation end (AGE) products, activated platelets, monocytes, apoptotic cells and both Gram-negative and Gram-positive bacteria. (Microbial infection) May serve as a receptor for adhesin A variant 3 (nadA) of N.meningitidis. This Homo sapiens (Human) protein is Oxidized low-density lipoprotein receptor 1 (OLR1).